The following is a 125-amino-acid chain: Large ribosomal subunit protein bL19 (125 aa).

It belongs to the bacterial ribosomal protein bL19 family.

This protein is located at the 30S-50S ribosomal subunit interface and may play a role in the structure and function of the aminoacyl-tRNA binding site. The protein is Large ribosomal subunit protein bL19 of Synechococcus sp. (strain JA-2-3B'a(2-13)) (Cyanobacteria bacterium Yellowstone B-Prime).